Reading from the N-terminus, the 395-residue chain is tRNA (guanine-N(7)-)-methyltransferase (395 aa).

S-adenosyl-L-methionine-binding residues include E126, E151, and D178. Substrate contacts are provided by K204 and D234.

It belongs to the class I-like SAM-binding methyltransferase superfamily. TrmB family.

It carries out the reaction guanosine(46) in tRNA + S-adenosyl-L-methionine = N(7)-methylguanosine(46) in tRNA + S-adenosyl-L-homocysteine. The protein operates within tRNA modification; N(7)-methylguanine-tRNA biosynthesis. Its function is as follows. Catalyzes the formation of N(7)-methylguanine at position 46 (m7G46) in tRNA. This chain is tRNA (guanine-N(7)-)-methyltransferase, found in Campylobacter fetus subsp. fetus (strain 82-40).